We begin with the raw amino-acid sequence, 452 residues long: Adenylyltransferase and sulfurtransferase MOCS3 (452 aa).

ATP is bound by residues Gly99, Asp120, 127–131 (SNLHR), Lys144, and 188–189 (DN). Residues Cys230 and Cys233 each contribute to the Zn(2+) site. Cys247 serves as the catalytic Glycyl thioester intermediate; for adenylyltransferase activity. 2 residues coordinate Zn(2+): Cys305 and Cys308. Residues 354-450 (KTKAHLLLDV…WTNQVDQSFP (97 aa)) form the Rhodanese domain. The Cysteine persulfide intermediate; for sulfurtransferase activity role is filled by Cys409.

This sequence in the N-terminal section; belongs to the HesA/MoeB/ThiF family. UBA4 subfamily. Zn(2+) serves as cofactor.

It localises to the cytoplasm. The protein localises to the cytosol. It carries out the reaction [molybdopterin-synthase sulfur-carrier protein]-C-terminal Gly-Gly + ATP + H(+) = [molybdopterin-synthase sulfur-carrier protein]-C-terminal Gly-Gly-AMP + diphosphate. The enzyme catalyses [molybdopterin-synthase sulfur-carrier protein]-C-terminal Gly-Gly-AMP + S-sulfanyl-L-cysteinyl-[cysteine desulfurase] + AH2 = [molybdopterin-synthase sulfur-carrier protein]-C-terminal-Gly-aminoethanethioate + L-cysteinyl-[cysteine desulfurase] + A + AMP + 2 H(+). Its pathway is tRNA modification; 5-methoxycarbonylmethyl-2-thiouridine-tRNA biosynthesis. It functions in the pathway cofactor biosynthesis; molybdopterin biosynthesis. Plays a central role in 2-thiolation of mcm(5)S(2)U at tRNA wobble positions of cytosolic tRNA(Lys), tRNA(Glu) and tRNA(Gln). Also essential during biosynthesis of the molybdenum cofactor. Acts by mediating the C-terminal thiocarboxylation of sulfur carriers URM1 and MOCS2A. Its N-terminus first activates URM1 and MOCS2A as acyl-adenylates (-COAMP), then the persulfide sulfur on the catalytic cysteine is transferred to URM1 and MOCS2A to form thiocarboxylation (-COSH) of their C-terminus. The reaction probably involves hydrogen sulfide that is generated from the persulfide intermediate and that acts as a nucleophile towards URM1 and MOCS2A. Subsequently, a transient disulfide bond is formed. Does not use thiosulfate as sulfur donor; NFS1 probably acting as a sulfur donor for thiocarboxylation reactions. The sequence is that of Adenylyltransferase and sulfurtransferase MOCS3 from Drosophila virilis (Fruit fly).